Consider the following 78-residue polypeptide: Large ribosomal subunit protein bL28 (78 aa).

This sequence belongs to the bacterial ribosomal protein bL28 family.

This Trichodesmium erythraeum (strain IMS101) protein is Large ribosomal subunit protein bL28.